A 182-amino-acid polypeptide reads, in one-letter code: NADH-quinone oxidoreductase subunit I (182 aa).

4Fe-4S ferredoxin-type domains are found at residues 52–82 (LTRD…LQKA) and 92–121 (DFFR…LTPD). 8 residues coordinate [4Fe-4S] cluster: Cys-62, Cys-65, Cys-68, Cys-72, Cys-101, Cys-104, Cys-107, and Cys-111.

It belongs to the complex I 23 kDa subunit family. In terms of assembly, NDH-1 is composed of 13 different subunits. Subunits NuoA, H, J, K, L, M, N constitute the membrane sector of the complex. The cofactor is [4Fe-4S] cluster.

The protein resides in the cell inner membrane. The enzyme catalyses a quinone + NADH + 5 H(+)(in) = a quinol + NAD(+) + 4 H(+)(out). Functionally, NDH-1 shuttles electrons from NADH, via FMN and iron-sulfur (Fe-S) centers, to quinones in the respiratory chain. The immediate electron acceptor for the enzyme in this species is believed to be ubiquinone. Couples the redox reaction to proton translocation (for every two electrons transferred, four hydrogen ions are translocated across the cytoplasmic membrane), and thus conserves the redox energy in a proton gradient. The sequence is that of NADH-quinone oxidoreductase subunit I from Pseudomonas syringae pv. tomato (strain ATCC BAA-871 / DC3000).